Consider the following 337-residue polypeptide: Delta-aminolevulinic acid dehydratase (337 aa).

Lys205 (schiff-base intermediate with substrate) is an active-site residue. The 5-aminolevulinate site is built by Arg215 and Lys229. Mg(2+) is bound at residue Glu245. Lys260 functions as the Schiff-base intermediate with substrate in the catalytic mechanism. The 5-aminolevulinate site is built by Ser286 and Tyr324.

This sequence belongs to the ALAD family. Homooctamer; formed by oligomerization of dimers. The cofactor is Mg(2+).

It carries out the reaction 2 5-aminolevulinate = porphobilinogen + 2 H2O + H(+). The protein operates within porphyrin-containing compound metabolism; protoporphyrin-IX biosynthesis; coproporphyrinogen-III from 5-aminolevulinate: step 1/4. Its activity is regulated as follows. Stimulated by magnesium ions. Catalyzes an early step in the biosynthesis of tetrapyrroles. Binds two molecules of 5-aminolevulinate per subunit, each at a distinct site, and catalyzes their condensation to form porphobilinogen. This chain is Delta-aminolevulinic acid dehydratase (hemB), found in Pseudomonas aeruginosa (strain ATCC 15692 / DSM 22644 / CIP 104116 / JCM 14847 / LMG 12228 / 1C / PRS 101 / PAO1).